The sequence spans 414 residues: Tyrosine--tRNA ligase (414 aa).

L-tyrosine is bound at residue Tyr-40. Positions Ala-45–His-54 match the 'HIGH' region motif. 2 residues coordinate L-tyrosine: Tyr-175 and Gln-179. The short motif at Lys-235–Ser-239 is the 'KMSKS' region element. Residue Lys-238 participates in ATP binding. The region spanning Leu-349–Gly-414 is the S4 RNA-binding domain.

The protein belongs to the class-I aminoacyl-tRNA synthetase family. TyrS type 1 subfamily. As to quaternary structure, homodimer.

The protein localises to the cytoplasm. It catalyses the reaction tRNA(Tyr) + L-tyrosine + ATP = L-tyrosyl-tRNA(Tyr) + AMP + diphosphate + H(+). In terms of biological role, catalyzes the attachment of tyrosine to tRNA(Tyr) in a two-step reaction: tyrosine is first activated by ATP to form Tyr-AMP and then transferred to the acceptor end of tRNA(Tyr). This is Tyrosine--tRNA ligase from Paracoccus denitrificans (strain Pd 1222).